A 137-amino-acid chain; its full sequence is Protein PsiE homolog (137 aa).

Helical transmembrane passes span 15-35, 55-75, 82-102, and 108-128; these read LRITLNLALIMVGFTLVAFLI, YYMTQDILTFFLYFEFIALIV, FHFPLRYFIYIGITAIIRFII, and ATSTLILSGAILLLVAALFLA.

Belongs to the PsiE family.

It localises to the cell membrane. The sequence is that of Protein PsiE homolog from Listeria innocua serovar 6a (strain ATCC BAA-680 / CLIP 11262).